The chain runs to 337 residues: Glyceraldehyde-3-phosphate dehydrogenase (337 aa).

Residues 12-13 (RI), D34, R78, and T121 contribute to the NAD(+) site. D-glyceraldehyde 3-phosphate-binding positions include 151-153 (SCT), T182, R199, 212-213 (SG), and R235. C152 serves as the catalytic Nucleophile. An NAD(+)-binding site is contributed by N317.

This sequence belongs to the glyceraldehyde-3-phosphate dehydrogenase family. In terms of assembly, homotetramer.

The protein localises to the cytoplasm. It catalyses the reaction D-glyceraldehyde 3-phosphate + phosphate + NAD(+) = (2R)-3-phospho-glyceroyl phosphate + NADH + H(+). It functions in the pathway carbohydrate degradation; glycolysis; pyruvate from D-glyceraldehyde 3-phosphate: step 1/5. Its function is as follows. Catalyzes the oxidative phosphorylation of glyceraldehyde 3-phosphate (G3P) to 1,3-bisphosphoglycerate (BPG) using the cofactor NAD. The first reaction step involves the formation of a hemiacetal intermediate between G3P and a cysteine residue, and this hemiacetal intermediate is then oxidized to a thioester, with concomitant reduction of NAD to NADH. The reduced NADH is then exchanged with the second NAD, and the thioester is attacked by a nucleophilic inorganic phosphate to produce BPG. This Lactococcus lactis subsp. lactis (strain IL1403) (Streptococcus lactis) protein is Glyceraldehyde-3-phosphate dehydrogenase (gap).